A 569-amino-acid chain; its full sequence is uncharacterized protein (569 aa).

The chain crosses the membrane as a helical span at residues 2–22; sequence VVIAALLGSLAVLAFLFYLWY.

The protein localises to the membrane. This is an uncharacterized protein from Mycoplasma pneumoniae (strain ATCC 29342 / M129 / Subtype 1) (Mycoplasmoides pneumoniae).